The sequence spans 171 residues: Putative phosphoesterase BH1439 (171 aa).

H34 functions as the Proton donor in the catalytic mechanism. 2 short sequence motifs (HXTX) span residues H34–L37 and H115–I118. H115 functions as the Proton acceptor in the catalytic mechanism.

Belongs to the 2H phosphoesterase superfamily. YjcG family.

This Halalkalibacterium halodurans (strain ATCC BAA-125 / DSM 18197 / FERM 7344 / JCM 9153 / C-125) (Bacillus halodurans) protein is Putative phosphoesterase BH1439.